The following is a 334-amino-acid chain: Replication factor C subunit 4 (334 aa).

ATP is bound at residue 55–62 (GPPGTGKT).

The protein belongs to the activator 1 small subunits family. As to quaternary structure, heteropentamer of various rfc subunits that forms a complex (RFC) with PCNA in the presence of ATP.

The protein resides in the nucleus. Its function is as follows. The elongation of primed DNA templates by DNA polymerase delta and epsilon requires the action of the accessory proteins PCNA and activator 1. This subunit may be involved in the elongation of the multiprimed DNA template. This is Replication factor C subunit 4 (rfc-4) from Caenorhabditis elegans.